Here is a 156-residue protein sequence, read N- to C-terminus: Cyclic pyranopterin monophosphate synthase (156 aa).

Substrate contacts are provided by residues 73–75 (LCH) and 110–111 (ME). D125 is a catalytic residue.

The protein belongs to the MoaC family. In terms of assembly, homohexamer; trimer of dimers.

It catalyses the reaction (8S)-3',8-cyclo-7,8-dihydroguanosine 5'-triphosphate = cyclic pyranopterin phosphate + diphosphate. It functions in the pathway cofactor biosynthesis; molybdopterin biosynthesis. Its function is as follows. Catalyzes the conversion of (8S)-3',8-cyclo-7,8-dihydroguanosine 5'-triphosphate to cyclic pyranopterin monophosphate (cPMP). The chain is Cyclic pyranopterin monophosphate synthase from Pseudomonas entomophila (strain L48).